The chain runs to 263 residues: Pro-opiomelanocortin (263 aa).

The signal sequence occupies residues 1–26 (MLQPVWHACILAILGVFIFHVGEVRS). Position 27 is a pyrrolidone carboxylic acid (Gln-27). The residue at position 87 (Phe-87) is a Phenylalanine amide. Asn-91 carries an N-linked (GlcNAc...) asparagine glycan. The propeptide occupies 107-141 (EDIANYPILNLFLGSDNQNTQEGIMEDDALDRQDS). Val-156 carries the valine amide modification.

Belongs to the POMC family. In terms of processing, specific enzymatic cleavages at paired basic residues yield the different active peptides.

It is found in the secreted. In terms of biological role, stimulates the adrenal glands to release cortisol. Anorexigenic peptide. Increases the pigmentation of skin by increasing melanin production in melanocytes. Its function is as follows. Increases the pigmentation of skin by increasing melanin production in melanocytes. Functionally, endogenous orexigenic opiate. In terms of biological role, endogenous opiate. The chain is Pro-opiomelanocortin (pomc) from Aquarana catesbeiana (American bullfrog).